Here is a 367-residue protein sequence, read N- to C-terminus: 4-hydroxyphenylpyruvate dioxygenase (367 aa).

2 consecutive VOC domains span residues 3–135 and 166–324; these read GFDH…FVDR and LIDH…IFTN. The Fe cation site is built by histidine 169, histidine 252, and glutamate 335.

This sequence belongs to the 4HPPD family. The cofactor is Fe cation.

It catalyses the reaction 3-(4-hydroxyphenyl)pyruvate + O2 = homogentisate + CO2. It participates in amino-acid degradation; L-phenylalanine degradation; acetoacetate and fumarate from L-phenylalanine: step 3/6. Key enzyme in the degradation of tyrosine. The sequence is that of 4-hydroxyphenylpyruvate dioxygenase (hpd) from Dictyostelium discoideum (Social amoeba).